The sequence spans 160 residues: Protein max (160 aa).

Acidic residues predominate over residues 1 to 13; the sequence is MSDNDDIEVESDE. Positions 1 to 40 are disordered; that stretch reads MSDNDDIEVESDEEQPRFQSAADKRAHHNALERKRRDHIK. Residue Ser-2 is modified to N-acetylserine. Phosphoserine occurs at positions 2 and 11. The region spanning 23–74 is the bHLH domain; the sequence is DKRAHHNALERKRRDHIKDSFHSLRDSVPSLQGEKASRAQILDKATEYIQYM. Basic and acidic residues predominate over residues 29 to 40; it reads NALERKRRDHIK. Lys-66 is modified (N6-acetyllysine). Residues 81 to 102 form a leucine-zipper region; sequence HQQDIDDLKRQNALLEQQVRAL. A disordered region spans residues 104–160; the sequence is KARSSAQLQTNYPSSDNSLYTNAKGGTISAFDGGSDSSSESEPEEPQSRKKLRMEAS. Ser-107 bears the Phosphoserine mark. A compositionally biased stretch (polar residues) spans 107–124; sequence SSAQLQTNYPSSDNSLYT. 2 positions are modified to N6-acetyllysine: Lys-153 and Lys-154.

It belongs to the MAX family. In terms of assembly, efficient DNA binding requires dimerization with another bHLH protein. Binds DNA as a heterodimer with MYC or MAD. Part of the E2F6.com-1 complex in G0 phase composed of E2F6, MGA, MAX, TFDP1, CBX3, BAT8, EUHMTASE1, RING1, RNF2, MBLR, L3MBTL2 and YAF2. Component of some MLL1/MLL complex, at least composed of the core components KMT2A/MLL1, ASH2L, HCFC1/HCF1, WDR5 and RBBP5, as well as the facultative components BACC1, CHD8, E2F6, HSP70, INO80C, KANSL1, LAS1L, MAX, MCRS1, MGA, MYST1/MOF, PELP1, PHF20, PRP31, RING2, RUVB1/TIP49A, RUVB2/TIP49B, SENP3, TAF1, TAF4, TAF6, TAF7, TAF9 and TEX10. Interacts with SPAG9. The heterodimer MYC:MAX interacts with ABI1; the interaction may enhance MYC:MAX transcriptional activity. Phosphorylated.

It localises to the nucleus. The protein resides in the cell projection. It is found in the dendrite. Functionally, transcription regulator. Forms a sequence-specific DNA-binding protein complex with MYC or MAD which recognizes the core sequence 5'-CAC[GA]TG-3'. The MYC:MAX complex is a transcriptional activator, whereas the MAD:MAX complex is a repressor. CpG methylation of the recognition site greatly inhibits DNA binding, suggesting that DNA methylation may regulate the MYC:MAX complex in vivo. May repress transcription via the recruitment of a chromatin remodeling complex containing H3 'Lys-9' histone methyltransferase activity. Represses MYC transcriptional activity from E-box elements. The sequence is that of Protein max from Mus musculus (Mouse).